The primary structure comprises 862 residues: uncharacterized protein (862 aa).

3 disordered regions span residues 45–91, 633–824, and 837–862; these read HPPV…PDEV, RAEQ…GDDD, and GGSG…LLLS. Composition is skewed to acidic residues over residues 57 to 69 and 78 to 91; these read MDVD…EKDE and PEVE…PDEV. Basic and acidic residues-rich tracts occupy residues 633–650, 657–686, and 694–703; these read RAEQ…DAAK, REAE…KAEK, and TKKEKTEKKT. Residues 751 to 760 are compositionally biased toward basic residues; sequence EKKKRTAAKK. Basic and acidic residues predominate over residues 761 to 779; sequence KTVDRPSGHRPSSKKEYRS.

This is an uncharacterized protein from Ictaluridae (bullhead catfishes).